The following is a 643-amino-acid chain: 1-deoxy-D-xylulose-5-phosphate synthase (643 aa).

Residues histidine 71 and serine 112–alanine 114 contribute to the thiamine diphosphate site. Position 144 (aspartate 144) interacts with Mg(2+). Residues glycine 145–alanine 146, asparagine 173, tyrosine 284, and glutamate 365 contribute to the thiamine diphosphate site. Residue asparagine 173 participates in Mg(2+) binding.

The protein belongs to the transketolase family. DXPS subfamily. Homodimer. It depends on Mg(2+) as a cofactor. The cofactor is thiamine diphosphate.

The enzyme catalyses D-glyceraldehyde 3-phosphate + pyruvate + H(+) = 1-deoxy-D-xylulose 5-phosphate + CO2. The protein operates within metabolic intermediate biosynthesis; 1-deoxy-D-xylulose 5-phosphate biosynthesis; 1-deoxy-D-xylulose 5-phosphate from D-glyceraldehyde 3-phosphate and pyruvate: step 1/1. Functionally, catalyzes the acyloin condensation reaction between C atoms 2 and 3 of pyruvate and glyceraldehyde 3-phosphate to yield 1-deoxy-D-xylulose-5-phosphate (DXP). This chain is 1-deoxy-D-xylulose-5-phosphate synthase, found in Mycobacterium leprae (strain Br4923).